The following is a 417-amino-acid chain: XO lethal protein 1 (417 aa).

Residues 373–417 are disordered; it reads VSPGETSSEGISDEHHYEEYDEDDIMEEEEAPSARQDDTYDEDEE. Positions 391–403 are enriched in acidic residues; it reads EYDEDDIMEEEEA.

The protein belongs to the GHMP kinase family. Xol-1 subfamily.

Its subcellular location is the nucleus. Sex-determining factor that is required for sexual differentiation and X chromosome dosage compensation to promote male development. High expression during gastrulation triggers male development, while low expression at that time triggers hermaphrodite development. Although related to GHMP kinase, its mode of action remains unclear. In Caenorhabditis elegans, this protein is XO lethal protein 1.